Reading from the N-terminus, the 1533-residue chain is DNA topoisomerase 2-alpha (1533 aa).

At M1 the chain carries N-acetylmethionine. The segment at 1–22 (MEVSPLQPVNENMQVNKTKKNE) is disordered. S4 is subject to Phosphoserine. A compositionally biased stretch (polar residues) spans 7–16 (QPVNENMQVN). K17 participates in a covalent cross-link: Glycyl lysine isopeptide (Lys-Gly) (interchain with G-Cter in SUMO2). ATP contacts are provided by residues N91, N120, and 148–150 (SSN). Residues K156 and K157 each participate in a glycyl lysine isopeptide (Lys-Gly) (interchain with G-Cter in SUMO2) cross-link. 161–168 (GRNGYGAK) contributes to the ATP binding site. K261 participates in a covalent cross-link: Glycyl lysine isopeptide (Lys-Gly) (interchain with G-Cter in SUMO2). T282 is subject to Phosphothreonine. An interaction with DNA region spans residues 342 to 344 (KKK). Residue K352 forms a Glycyl lysine isopeptide (Lys-Gly) (interchain with G-Cter in SUMO2) linkage. 376-378 (QTK) is an ATP binding site. Glycyl lysine isopeptide (Lys-Gly) (interchain with G-Cter in SUMO2) cross-links involve residues K386, K397, K416, K418, K425, and K440. A Toprim domain is found at 455-572 (CTLILTEGDS…SLLRHRFLEE (118 aa)). Residue E461 coordinates Mg(2+). Residues K466, K480, and K529 each participate in a glycyl lysine isopeptide (Lys-Gly) (interchain with G-Cter in SUMO2) cross-link. 2 residues coordinate Mg(2+): D541 and D543. Glycyl lysine isopeptide (Lys-Gly) (interchain with G-Cter in SUMO2) cross-links involve residues K584, K599, K614, K622, K625, K632, K639, K655, K662, and K676. Positions 715–1171 (IPSMVDGLKP…SPSDLWKEDL (457 aa)) constitute a Topo IIA-type catalytic domain. Y805 functions as the O-(5'-phospho-DNA)-tyrosine intermediate in the catalytic mechanism. Positions 990 to 999 (KLQTSLTCNS) are interaction with DNA. K1075 participates in a covalent cross-link: Glycyl lysine isopeptide (Lys-Gly) (interchain with G-Cter in SUMO2). 2 disordered regions span residues 1090–1121 (WKEAQQKVPDEEENEESDNEKEADKSDSVADS) and 1183–1215 (AKEKQDEQIGLPGKGGKAKGKKTQMAEVLPSPC). Positions 1099–1108 (DEEENEESDN) are enriched in acidic residues. S1106 carries the post-translational modification Phosphoserine; by CK1. Glycyl lysine isopeptide (Lys-Gly) (interchain with G-Cter in SUMO2) cross-links involve residues K1114, K1196, and K1204. T1205 bears the Phosphothreonine mark. S1213 bears the Phosphoserine mark. Residue K1228 forms a Glycyl lysine isopeptide (Lys-Gly) (interchain with G-Cter in SUMO2) linkage. Residues 1231 to 1533 (AEKKIKKKIK…LEESDEDDLF (303 aa)) are disordered. Residue K1240 forms a Glycyl lysine isopeptide (Lys-Gly) (interchain with G-Cter in SUMO1); alternate linkage. Residue K1240 forms a Glycyl lysine isopeptide (Lys-Gly) (interchain with G-Cter in SUMO2); alternate linkage. T1244 carries the post-translational modification Phosphothreonine. S1247 carries the post-translational modification Phosphoserine. Residues 1256-1272 (EGLKQRLEKKQKREPGT) show a composition bias toward basic and acidic residues. Glycyl lysine isopeptide (Lys-Gly) (interchain with G-Cter in SUMO2) cross-links involve residues K1259, K1276, K1283, and K1286. Residues S1295, S1297, S1299, and S1302 each carry the phosphoserine modification. Residue T1327 is modified to Phosphothreonine. Phosphoserine occurs at positions 1332 and 1337. A Phosphothreonine modification is found at T1343. S1351 and S1354 each carry phosphoserine. The segment covering 1360–1371 (TSPKHTNKEPKP) has biased composition (basic and acidic residues). Residues K1363, K1367, and K1373 each participate in a glycyl lysine isopeptide (Lys-Gly) (interchain with G-Cter in SUMO2) cross-link. Residues S1374 and S1377 each carry the phosphoserine modification. K1387 participates in a covalent cross-link: Glycyl lysine isopeptide (Lys-Gly) (interchain with G-Cter in SUMO2). Phosphoserine occurs at positions 1393 and 1395. Residues 1409–1433 (KPVSKKNVTVKKTAAKSQSSTSTTG) are compositionally biased toward low complexity. K1424 is covalently cross-linked (Glycyl lysine isopeptide (Lys-Gly) (interchain with G-Cter in SUMO2); alternate). K1424 carries the N6-acetyllysine; alternate modification. The segment at 1435-1441 (KKRAAPK) is interaction with PLSCR1. The span at 1443–1455 (AKKDPDLDSDVSK) shows a compositional bias: basic and acidic residues. A Glycyl lysine isopeptide (Lys-Gly) (interchain with G-Cter in SUMO2); alternate cross-link involves residue K1444. K1444 bears the N6-acetyllysine; alternate mark. Position 1451 is a phosphoserine (S1451). Glycyl lysine isopeptide (Lys-Gly) (interchain with G-Cter in SUMO2) cross-links involve residues K1456 and K1461. S1471 is subject to Phosphoserine. T1472 is modified (phosphothreonine). Residues S1473, S1476, and S1478 each carry the phosphoserine modification. Residues K1486 and K1494 each participate in a glycyl lysine isopeptide (Lys-Gly) (interchain with G-Cter in SUMO2) cross-link. The span at 1493–1504 (PKGESDDFHLDL) shows a compositional bias: basic and acidic residues. A phosphoserine mark is found at S1497 and S1527.

The protein belongs to the type II topoisomerase family. In terms of assembly, homodimer. Interacts with COPS5. Interacts with RECQL5; this stimulates DNA decatenation. Interacts with SETMAR; stimulates the topoisomerase activity. Interacts with DHX9; this interaction occurs in a E2 enzyme UBE2I- and RNA-dependent manner, negatively regulates DHX9-mediated double-stranded DNA and RNA duplex helicase activity and stimulates TOP2A-mediated supercoiled DNA relaxation activity. Interacts with HNRNPU (via C-terminus); this interaction protects the topoisomerase TOP2A from degradation and positively regulates the relaxation of supercoiled DNA in a RNA-dependent manner. Interacts with MCM3AP. Interacts with ERCC6. Interacts with PLSCR1. Interacts with GCNA; this interaction allows the resolution of topoisomerase II (TOP2A) DNA-protein cross-links. Interacts with POL1RA/RPA1 (via dock II) and UBTF in the context of Pol I complex; may assist Pol I transcription initiation by releasing supercoils occurring during DNA unwinding. Interacts with TPRN; TPRN interacts with a number of DNA damage response proteins, is recruited to sites of DNA damage and may play a role in DNA damage repair. Requires Mg(2+) as cofactor. It depends on Mn(2+) as a cofactor. The cofactor is Ca(2+). Post-translationally, phosphorylation has no effect on catalytic activity. However, phosphorylation at Ser-1106 by CSNK1D/CK1 promotes DNA cleavable complex formation.

It localises to the cytoplasm. The protein localises to the nucleus. It is found in the nucleoplasm. Its subcellular location is the nucleolus. It carries out the reaction ATP-dependent breakage, passage and rejoining of double-stranded DNA.. Key decatenating enzyme that alters DNA topology by binding to two double-stranded DNA molecules, generating a double-stranded break in one of the strands, passing the intact strand through the broken strand, and religating the broken strand. May play a role in regulating the period length of BMAL1 transcriptional oscillation. The polypeptide is DNA topoisomerase 2-alpha (TOP2A) (Sus scrofa (Pig)).